Reading from the N-terminus, the 276-residue chain is Undecaprenyl-diphosphatase 2 (276 aa).

Helical transmembrane passes span 1 to 21, 44 to 64, 87 to 107, 114 to 134, 150 to 170, 190 to 210, 222 to 242, and 251 to 271; these read MSLW…LFPV, QLLP…LWYF, GHLM…GLLL, VFHD…LLWL, LTFK…IPGF, AAEF…LLEL, DALL…RFLM, and LASF…WFMF.

It belongs to the UppP family.

It is found in the cell inner membrane. The enzyme catalyses di-trans,octa-cis-undecaprenyl diphosphate + H2O = di-trans,octa-cis-undecaprenyl phosphate + phosphate + H(+). In terms of biological role, catalyzes the dephosphorylation of undecaprenyl diphosphate (UPP). Confers resistance to bacitracin. The sequence is that of Undecaprenyl-diphosphatase 2 from Burkholderia thailandensis (strain ATCC 700388 / DSM 13276 / CCUG 48851 / CIP 106301 / E264).